The primary structure comprises 234 residues: Uridylate kinase (234 aa).

9–12 is an ATP binding site; it reads KLSG. Residue glycine 51 participates in UMP binding. 2 residues coordinate ATP: glycine 52 and arginine 56. UMP is bound by residues aspartate 71 and 132–139; that span reads CGNPFFTT. ATP is bound by residues threonine 159, tyrosine 165, and aspartate 168.

This sequence belongs to the UMP kinase family. As to quaternary structure, homohexamer.

It is found in the cytoplasm. The catalysed reaction is UMP + ATP = UDP + ADP. It participates in pyrimidine metabolism; CTP biosynthesis via de novo pathway; UDP from UMP (UMPK route): step 1/1. Inhibited by UTP. Its function is as follows. Catalyzes the reversible phosphorylation of UMP to UDP. This chain is Uridylate kinase, found in Prochlorococcus marinus subsp. pastoris (strain CCMP1986 / NIES-2087 / MED4).